Here is a 434-residue protein sequence, read N- to C-terminus: Arginine/serine-rich coiled-coil protein 2 (434 aa).

Basic and acidic residues predominate over residues 1–27 (MAASDTERDGLAPEKTSPDRDKKKEQS). The disordered stretch occupies residues 1–230 (MAASDTERDG…PSPPPFRGRN (230 aa)). N-acetylalanine is present on Ala-2. Ser-4 bears the Phosphoserine mark. Thr-6 and Thr-16 each carry phosphothreonine. Ser-17, Ser-30, and Ser-32 each carry phosphoserine. Basic residues predominate over residues 35–51 (ASKHHYSRSRSRSRERK). The span at 66-111 (RSKEGRRHESKDKSSKKHKSEEHNDKEHSSDKGRERLNSSENGEDR) shows a compositional bias: basic and acidic residues. Residue Ser-104 is modified to Phosphoserine. The segment covering 112 to 214 (HKRKERKSSR…KRIEKPRRFS (103 aa)) has biased composition (basic residues). The stretch at 230–270 (NTAMDAQEALARRLERAKKLQEQREKEMVEKQKQQEIAAAA) forms a coiled coil. Lys-375 participates in a covalent cross-link: Glycyl lysine isopeptide (Lys-Gly) (interchain with G-Cter in SUMO1); alternate. Residue Lys-375 forms a Glycyl lysine isopeptide (Lys-Gly) (interchain with G-Cter in SUMO2); alternate linkage. Position 376 is a phosphoserine (Ser-376).

This sequence belongs to the RSRC2 family.

The chain is Arginine/serine-rich coiled-coil protein 2 (RSRC2) from Homo sapiens (Human).